We begin with the raw amino-acid sequence, 301 residues long: Immediate early response gene 5-like protein (301 aa).

The protein belongs to the IER family.

The chain is Immediate early response gene 5-like protein (ier5l) from Danio rerio (Zebrafish).